A 1191-amino-acid polypeptide reads, in one-letter code: Roquin-2 (1191 aa).

Residues Cys-14, Cys-17, Cys-33, His-35, Cys-38, Cys-50, and Asp-53 each coordinate Zn(2+). The segment at 14–54 adopts an RING-type; degenerate zinc-finger fold; sequence CPICYNEFDENVHKPISLGCSHTVCKTCLNKLHRKACPFDQ. Residues 91 to 170 form an HEPN-N region; the sequence is ENKHYEVAKK…RTVTELILQH (80 aa). Positions 171-325 are ROQ; it reads QNPQQLSANL…SIIDKLQSPE (155 aa). The segment at 326–396 is HEPN-C; sequence SFAKSVQELT…GLVDFIQNYS (71 aa). The segment at 410 to 438 adopts a C3H1-type zinc-finger fold; sequence KYKTSMCRDLRQQGGCPRGTNCTFAHSQE. Disordered regions lie at residues 528 to 576 and 644 to 680; these read GANG…NSVP and ESSL…PQPY. The segment covering 530-546 has biased composition (polar residues); it reads NGQNAAGPSADSVTENK. The residue at position 549 (Ser-549) is a Phosphoserine. Over residues 554–576 the composition is skewed to polar residues; it reads PVSNVAATSAGPSNVGTELNSVP. A phosphoserine mark is found at Ser-808, Ser-983, and Ser-1119.

In terms of assembly, interacts with EDC4. Interacts with CCR4-NOT deadenylase complex. Interacts with MAP3K5; the interaction is probably stimulus-dependent. Post-translationally, proteolytically cleaved after Arg-509 and Arg-585 by MALT1 in activated CD4(+) T cells; cleavage at Arg-509 and Arg-585 is critical for promoting RC3H1 degradation in response to T-cell receptor (TCR) stimulation, and hence is necessary for prolonging the stability of a set of mRNAs controlling Th17 cell differentiation. As to expression, expressed in spleen, testis, ovary and small intestine.

It is found in the cytoplasm. Its subcellular location is the P-body. It catalyses the reaction S-ubiquitinyl-[E2 ubiquitin-conjugating enzyme]-L-cysteine + [acceptor protein]-L-lysine = [E2 ubiquitin-conjugating enzyme]-L-cysteine + N(6)-ubiquitinyl-[acceptor protein]-L-lysine.. It participates in protein modification; protein ubiquitination. Its activity is regulated as follows. Binding to dsRNA, but not CDE RNA, crosstalks with the E3 ubiquitin ligase activity and may inhibit ubiquitination. In terms of biological role, post-transcriptional repressor of mRNAs containing a conserved stem loop motif, called constitutive decay element (CDE), which is often located in the 3'-UTR, as in HMGXB3, ICOS, IER3, NFKBID, NFKBIZ, PPP1R10, TNF and in many more mRNAs. Binds to CDE and promotes mRNA deadenylation and degradation. This process does not involve miRNAs. In follicular helper T (Tfh) cells, represses of ICOS and TNFRSF4 expression, thus preventing spontaneous Tfh cell differentiation, germinal center B-cell differentiation in the absence of immunization and autoimmunity. In resting or LPS-stimulated macrophages, controls inflammation by suppressing TNF expression. Also recognizes CDE in its own mRNA and in that of paralogous RC3H1, possibly leading to feedback loop regulation. miRNA-binding protein that regulates microRNA homeostasis. Enhances DICER-mediated processing of pre-MIR146a but reduces mature MIR146a levels through an increase of 3' end uridylation. Both inhibits ICOS mRNA expression and they may act together to exert the suppression. Acts as a ubiquitin E3 ligase. Pairs with E2 enzymes UBE2B, UBE2D2, UBE2E2, UBE2E3, UBE2G2, UBE2K and UBE2Q2 and produces polyubiquitin chains. Shows the strongest activity when paired with UBE2N:UBE2V1 or UBE2N:UBE2V2 E2 complexes and generate both short and long polyubiquitin chains. Involved in the ubiquitination of MAP3K5. Able to interact with double-stranded RNA (dsRNA). In Homo sapiens (Human), this protein is Roquin-2 (RC3H2).